The chain runs to 215 residues: ATP phosphoribosyltransferase (215 aa).

This sequence belongs to the ATP phosphoribosyltransferase family. Short subfamily. As to quaternary structure, heteromultimer composed of HisG and HisZ subunits.

The protein resides in the cytoplasm. The catalysed reaction is 1-(5-phospho-beta-D-ribosyl)-ATP + diphosphate = 5-phospho-alpha-D-ribose 1-diphosphate + ATP. It participates in amino-acid biosynthesis; L-histidine biosynthesis; L-histidine from 5-phospho-alpha-D-ribose 1-diphosphate: step 1/9. In terms of biological role, catalyzes the condensation of ATP and 5-phosphoribose 1-diphosphate to form N'-(5'-phosphoribosyl)-ATP (PR-ATP). Has a crucial role in the pathway because the rate of histidine biosynthesis seems to be controlled primarily by regulation of HisG enzymatic activity. This chain is ATP phosphoribosyltransferase (hisG), found in Clostridium acetobutylicum (strain ATCC 824 / DSM 792 / JCM 1419 / IAM 19013 / LMG 5710 / NBRC 13948 / NRRL B-527 / VKM B-1787 / 2291 / W).